The following is an 82-amino-acid chain: uncharacterized protein (82 aa).

2 helical membrane-spanning segments follow: residues 32-52 (PFSI…IGIL) and 59-79 (SKPL…FNII).

It is found in the cell membrane. This is an uncharacterized protein from Rickettsia prowazekii (strain Madrid E).